The following is a 335-amino-acid chain: Cathepsin B (335 aa).

The first 17 residues, 1–17 (MWRLLATLSCLVLLTSA), serve as a signal peptide directing secretion. Positions 18–79 (RESLHFQPLS…QRAAFAADMI (62 aa)) are cleaved as a propeptide — activation peptide. Cystine bridges form between Cys-93/Cys-122, Cys-105/Cys-150, Cys-141/Cys-207, Cys-142/Cys-146, Cys-179/Cys-211, and Cys-187/Cys-198. The active site involves Cys-108. Asn-192 carries an N-linked (GlcNAc...) asparagine glycan. Lys-220 carries the post-translational modification N6-acetyllysine. The cysteines at positions 227 and 331 are disulfide-linked. Catalysis depends on residues His-278 and Asn-298. The propeptide occupies 333–335 (PHF).

Belongs to the peptidase C1 family. As to quaternary structure, dimer of a heavy chain and a light chain cross-linked by a disulfide bond. Interacts with SRPX2. Directly interacts with SHKBP1. As to expression, expressed in heart (at protein level).

Its subcellular location is the lysosome. It is found in the melanosome. The protein localises to the secreted. The protein resides in the extracellular space. It localises to the apical cell membrane. The catalysed reaction is Hydrolysis of proteins with broad specificity for peptide bonds. Preferentially cleaves -Arg-Arg-|-Xaa bonds in small molecule substrates (thus differing from cathepsin L). In addition to being an endopeptidase, shows peptidyl-dipeptidase activity, liberating C-terminal dipeptides.. In terms of biological role, thiol protease which is believed to participate in intracellular degradation and turnover of proteins. Cleaves matrix extracellular phosphoglycoprotein MEPE. Involved in the solubilization of cross-linked TG/thyroglobulin in the thyroid follicle lumen. Has also been implicated in tumor invasion and metastasis. This is Cathepsin B (CTSB) from Sus scrofa (Pig).